Consider the following 283-residue polypeptide: MATRLDGRAVSKKILADLKQTIAQLAQHDVTPTLAVVLVGSNPASEVYVRNKQRRAEDIGVRSLMFRMPEATTQADLLAKVAELNHDPDIDAILVQLPLPAGLDEQAVIDAIDPDKDVDGFSPVSVGRLWANEPTVVASTPYGIMALLDAYDIDVAGKRVVIIGRSNIVGRPLAGLMVNHDATVTIAHSKTRDLKQLAKEADILVVAVGVPHFIGADAVKPGAVVIDVGISRGADGKVLGDVDEAAVAPIASAITPVPGGVGPMTIASLMAQTVTLAKRRANG.

NADP(+)-binding positions include 164–166 (GRS), serine 189, and isoleucine 230.

This sequence belongs to the tetrahydrofolate dehydrogenase/cyclohydrolase family. As to quaternary structure, homodimer.

The enzyme catalyses (6R)-5,10-methylene-5,6,7,8-tetrahydrofolate + NADP(+) = (6R)-5,10-methenyltetrahydrofolate + NADPH. It carries out the reaction (6R)-5,10-methenyltetrahydrofolate + H2O = (6R)-10-formyltetrahydrofolate + H(+). The protein operates within one-carbon metabolism; tetrahydrofolate interconversion. Functionally, catalyzes the oxidation of 5,10-methylenetetrahydrofolate to 5,10-methenyltetrahydrofolate and then the hydrolysis of 5,10-methenyltetrahydrofolate to 10-formyltetrahydrofolate. In Lacticaseibacillus paracasei (strain ATCC 334 / BCRC 17002 / CCUG 31169 / CIP 107868 / KCTC 3260 / NRRL B-441) (Lactobacillus paracasei), this protein is Bifunctional protein FolD.